Here is a 159-residue protein sequence, read N- to C-terminus: Peptide methionine sulfoxide reductase MsrB (159 aa).

Positions 14-137 constitute a MsrB domain; sequence TEKLKENLTE…NSASLKFIAK (124 aa). Cys126 functions as the Nucleophile in the catalytic mechanism.

This sequence belongs to the MsrB Met sulfoxide reductase family.

The enzyme catalyses L-methionyl-[protein] + [thioredoxin]-disulfide + H2O = L-methionyl-(R)-S-oxide-[protein] + [thioredoxin]-dithiol. This chain is Peptide methionine sulfoxide reductase MsrB, found in Hathewaya histolytica (Clostridium histolyticum).